The following is a 209-amino-acid chain: Ancillary SecYEG translocon subunit (209 aa).

The Cytoplasmic segment spans residues 1–23; it reads MAAHLEEQQELDNFKYFWKTTGK. Residues 24-42 form a helical membrane-spanning segment; it reads WLFALLILAALGYLGYTVY. Residues 43 to 209 lie on the Periplasmic side of the membrane; sequence QNRAASQNQE…LLQMKLDSLK (167 aa). The TPR repeat unit spans residues 161 to 194; the sequence is PLLMETKGDVYAAQEKSQEALKNYGQALEKMPQD.

The protein belongs to the YfgM family. As to quaternary structure, interacts with the SecYEG translocon. Forms a complex with PpiD.

The protein resides in the cell inner membrane. Functionally, may mediate protein transfer from the SecYEG translocon to the periplasmic chaperone network via its periplasmic C-terminal region. The sequence is that of Ancillary SecYEG translocon subunit from Neisseria gonorrhoeae (strain ATCC 700825 / FA 1090).